The primary structure comprises 178 residues: Caveolin-1 (178 aa).

At S2 the chain carries N-acetylserine. S2 carries the post-translational modification Phosphoserine. The segment at 2-94 (SGGKYVDSEG…WKASFTTFTV (93 aa)) is required for homooligomerization. Residues 2-104 (SGGKYVDSEG…TKYWFYRLLS (103 aa)) lie on the Cytoplasmic side of the membrane. An N6-acetyllysine; alternate modification is found at K5. K5 participates in a covalent cross-link: Glycyl lysine isopeptide (Lys-Gly) (interchain with G-Cter in ubiquitin); alternate. Y6 is modified (phosphotyrosine). At S9 the chain carries Phosphoserine. Y14 is modified (phosphotyrosine; by ABL1). Y25 is subject to Phosphotyrosine. Glycyl lysine isopeptide (Lys-Gly) (interchain with G-Cter in ubiquitin) cross-links involve residues K26, K30, K39, K47, and K57. The interaction with CAVIN3 stretch occupies residues 82–94 (DGIWKASFTTFTV). The segment at residues 105-125 (ALFGIPMALIWGIYFAILSFL) is an intramembrane region (helical). Topologically, residues 126–178 (HIWAVVPCIKSFLIEIQCISRVYSIYVHTFCDPLFEAIGKIFSNIRINMQKEI) are cytoplasmic. Positions 131–142 (VPCIKSFLIEIQ) are interacts with SPRY1, SPRY2, SPRY3 and SPRY4. S-palmitoyl cysteine attachment occurs at residues C133, C143, and C156. The tract at residues 149–160 (SIYVHTFCDPLF) is interacts with SPRY1, SPRY2, and SPRY4. An interacts with SPRY1, SPRY2, SPRY3 and SPRY4 region spans residues 167–178 (FSNIRINMQKEI).

It belongs to the caveolin family. Homooligomer. Interacts with GLIPR2. Interacts with NOSTRIN. Interacts with SNAP25 and STX1A. Interacts (via the N-terminus) with DPP4; the interaction is direct. Interacts with CTNNB1, CDH1 and JUP. Interacts with PACSIN2; this interaction induces membrane tubulation. Interacts with SLC7A9. Interacts with BMX and BTK. Interacts with TGFBR1. Interacts with CAVIN3 (via leucine-zipper domain) in a cholesterol-sensitive manner. Interacts with CAVIN1. Interacts with EHD2 in a cholesterol-dependent manner. Forms a ternary complex with UBXN6 and VCP; mediates CAV1 targeting to lysosomes for degradation. Interacts with ABCG1; this interaction regulates ABCG1-mediated cholesterol efflux. Interacts with NEU3; this interaction enhances NEU3 sialidase activity within caveola. Interacts (via C-terminus) with SPRY1, SPRY2 (via C-terminus), SPRY3, and SPRY4. Interacts with IGFBP5; this interaction allows trafficking of IGFBP5 from the plasma membrane to the nucleus. In terms of processing, phosphorylated at Tyr-14 by ABL1 in response to oxidative stress. Ubiquitinated. Undergo monoubiquitination and multi- and/or polyubiquitination. Monoubiquitination of N-terminal lysines promotes integration in a ternary complex with UBXN6 and VCP which promotes oligomeric CAV1 targeting to lysosomes for degradation. Ubiquitinated by ZNRF1; leading to degradation and modulation of the TLR4-mediated immune response.

The protein resides in the golgi apparatus membrane. It is found in the cell membrane. It localises to the membrane. The protein localises to the caveola. Its subcellular location is the membrane raft. In terms of biological role, may act as a scaffolding protein within caveolar membranes. Forms a stable heterooligomeric complex with CAV2 that targets to lipid rafts and drives caveolae formation. Mediates the recruitment of CAVIN proteins (CAVIN1/2/3/4) to the caveolae. Interacts directly with G-protein alpha subunits and can functionally regulate their activity. Involved in the costimulatory signal essential for T-cell receptor (TCR)-mediated T-cell activation. Its binding to DPP4 induces T-cell proliferation and NF-kappa-B activation in a T-cell receptor/CD3-dependent manner. Recruits CTNNB1 to caveolar membranes and may regulate CTNNB1-mediated signaling through the Wnt pathway. Negatively regulates TGFB1-mediated activation of SMAD2/3 by mediating the internalization of TGFBR1 from membrane rafts leading to its subsequent degradation. Binds 20(S)-hydroxycholesterol (20(S)-OHC). The chain is Caveolin-1 (CAV1) from Muntiacus reevesi (Reeves' muntjac).